We begin with the raw amino-acid sequence, 301 residues long: MAVTFQHTPVLLTEVLTMLAPRPAGQYLDATVGGGGHALAVLQAAQPGGRLLGIDADPAALAATAARLQAAGLIEQAVLCHGSFADLATLAATAGFGAFDGILFDLGVSSYQLDTPERGFSFTADGPLDMRLDPTQGLTAADMVNRLSERELADIIFLYGEEHAARRIARAIVEHRRTQPFQRTAELAEVVARAVGGRHGRIHPATRTFQALRIAVNQELDRLRATLPQAVDLLAPGGRLAVISFHSLEDRIVKQFLRAEASGETPRLTIVTKKPIVPTAAEVANNPRARSAKLRVATRIG.

S-adenosyl-L-methionine contacts are provided by residues Gly-35 to His-37, Asp-55, Phe-84, Asp-105, and Gln-112.

This sequence belongs to the methyltransferase superfamily. RsmH family.

It is found in the cytoplasm. It carries out the reaction cytidine(1402) in 16S rRNA + S-adenosyl-L-methionine = N(4)-methylcytidine(1402) in 16S rRNA + S-adenosyl-L-homocysteine + H(+). Specifically methylates the N4 position of cytidine in position 1402 (C1402) of 16S rRNA. This chain is Ribosomal RNA small subunit methyltransferase H, found in Chloroflexus aurantiacus (strain ATCC 29366 / DSM 635 / J-10-fl).